A 496-amino-acid chain; its full sequence is Beta-amylase (496 aa).

Residues Asp-54, His-94, and Asp-102 each contribute to the substrate site. The active-site Proton donor is the Glu-187. Residues Lys-296, His-301, and Thr-343 each coordinate substrate. Glu-381 functions as the Proton acceptor in the catalytic mechanism. Substrate-binding positions include 382-383 and Arg-421; that span reads NA.

It belongs to the glycosyl hydrolase 14 family.

It catalyses the reaction Hydrolysis of (1-&gt;4)-alpha-D-glucosidic linkages in polysaccharides so as to remove successive maltose units from the non-reducing ends of the chains.. This Vigna unguiculata (Cowpea) protein is Beta-amylase (BMY1).